Reading from the N-terminus, the 207-residue chain is MRLRPLGIEGVWEITPEQRADPRGVFLDWYHVDRFAEAIGRPLRLAQANLSVSVRGVVRGIHFVDVPPGQAKYVTCVRGAVFDVVVDLRVGSPTYGCWEGTRLDDVSRRAVYLSEGIGHGFCAISDEATLCYLSSGTYDPATEHGVHPLDPELAIDWPTGTPLLSPRDQDALLLAEARDAGLLPTYATCQAVTVPSPAPGSVGDPGP.

Residues R23, D28, 47–49 (QAN), and R59 each bind substrate. H62 functions as the Proton acceptor in the catalytic mechanism. K72 and H119 together coordinate substrate. Residue Y132 is the Proton donor of the active site. E143 and R167 together coordinate substrate.

This sequence belongs to the dTDP-4-dehydrorhamnose 3,5-epimerase family.

Its pathway is antibiotic biosynthesis; novobiocin biosynthesis. In terms of biological role, dTDP-6-deoxy-D-xylo-4-hexulose 3-epimerase that acts together with NovU to catalyze the formation of dTDP-4-keto-6-deoxy-5-C-methyl-L-lyxo-hexose from dTDP-4-keto-6-deoxy-D-glucose in the novobiocin biosynthesis pathway, an aminocoumarin family antibiotic that targets bacterial DNA gyrases. The protein is dTDP-4-dehydrorhamnose 3-epimerase of Streptomyces niveus (Streptomyces spheroides).